The sequence spans 228 residues: DNA mismatch repair protein MutH (228 aa).

This sequence belongs to the MutH family.

Its subcellular location is the cytoplasm. In terms of biological role, sequence-specific endonuclease that cleaves unmethylated GATC sequences. It is involved in DNA mismatch repair. In Serratia proteamaculans (strain 568), this protein is DNA mismatch repair protein MutH.